The sequence spans 122 residues: Large ribosomal subunit protein bL12 (122 aa).

The protein belongs to the bacterial ribosomal protein bL12 family. As to quaternary structure, homodimer. Part of the ribosomal stalk of the 50S ribosomal subunit. Forms a multimeric L10(L12)X complex, where L10 forms an elongated spine to which 2 to 4 L12 dimers bind in a sequential fashion. Binds GTP-bound translation factors.

In terms of biological role, forms part of the ribosomal stalk which helps the ribosome interact with GTP-bound translation factors. Is thus essential for accurate translation. The protein is Large ribosomal subunit protein bL12 of Enterococcus faecalis (strain ATCC 700802 / V583).